The chain runs to 530 residues: Bifunctional purine biosynthesis protein PurH (530 aa).

An MGS-like domain is found at 1-148 (MNNPRPIRRA…KNHKDVTIVV (148 aa)).

This sequence belongs to the PurH family.

It carries out the reaction (6R)-10-formyltetrahydrofolate + 5-amino-1-(5-phospho-beta-D-ribosyl)imidazole-4-carboxamide = 5-formamido-1-(5-phospho-D-ribosyl)imidazole-4-carboxamide + (6S)-5,6,7,8-tetrahydrofolate. It catalyses the reaction IMP + H2O = 5-formamido-1-(5-phospho-D-ribosyl)imidazole-4-carboxamide. It participates in purine metabolism; IMP biosynthesis via de novo pathway; 5-formamido-1-(5-phospho-D-ribosyl)imidazole-4-carboxamide from 5-amino-1-(5-phospho-D-ribosyl)imidazole-4-carboxamide (10-formyl THF route): step 1/1. It functions in the pathway purine metabolism; IMP biosynthesis via de novo pathway; IMP from 5-formamido-1-(5-phospho-D-ribosyl)imidazole-4-carboxamide: step 1/1. This is Bifunctional purine biosynthesis protein PurH from Aliivibrio salmonicida (strain LFI1238) (Vibrio salmonicida (strain LFI1238)).